We begin with the raw amino-acid sequence, 421 residues long: Phosphoribosylamine--glycine ligase (421 aa).

Residues 108–314 enclose the ATP-grasp domain; that stretch reads KEIMVKYNVP…FAQNIDDIMM (207 aa). 134-195 lines the ATP pocket; the sequence is IEEQGAPIVV…EEFLDGEEFS (62 aa). 2 residues coordinate Mg(2+): E284 and N286.

This sequence belongs to the GARS family. Mg(2+) is required as a cofactor. It depends on Mn(2+) as a cofactor.

The enzyme catalyses 5-phospho-beta-D-ribosylamine + glycine + ATP = N(1)-(5-phospho-beta-D-ribosyl)glycinamide + ADP + phosphate + H(+). The protein operates within purine metabolism; IMP biosynthesis via de novo pathway; N(1)-(5-phospho-D-ribosyl)glycinamide from 5-phospho-alpha-D-ribose 1-diphosphate: step 2/2. The chain is Phosphoribosylamine--glycine ligase from Streptococcus pyogenes serotype M18 (strain MGAS8232).